Here is a 163-residue protein sequence, read N- to C-terminus: Small ribosomal subunit protein eS10A (163 aa).

Residues 92–163 (LTQTTRSNAV…GFGRASRYDN (72 aa)) are disordered. Residues 105-116 (GGPGGPGGGFGG) are compositionally biased toward gly residues.

The protein belongs to the eukaryotic ribosomal protein eS10 family.

The protein localises to the cytoplasm. The protein is Small ribosomal subunit protein eS10A (RpS10a) of Drosophila melanogaster (Fruit fly).